A 102-amino-acid chain; its full sequence is UPF0213 protein Spro_0507 (102 aa).

The 76-residue stretch at 6–81 (PTWHLYMLRM…KQLSKTQKER (76 aa)) folds into the GIY-YIG domain.

Belongs to the UPF0213 family.

In Serratia proteamaculans (strain 568), this protein is UPF0213 protein Spro_0507.